A 149-amino-acid chain; its full sequence is Gamma-glutamylaminecyclotransferase (149 aa).

7–10 contacts substrate; that stretch reads YGTL. Residue Glu-82 is the Proton acceptor of the active site.

This sequence belongs to the gamma-glutamylcyclotransferase family. Monomer.

The enzyme catalyses epsilon-(gamma-L-glutamyl)-L-lysine = 5-oxo-L-proline + L-lysine. In terms of biological role, contributes to degradation of proteins cross-linked by transglutaminases by degrading the cross-link between a lysine and a glutamic acid residue. Catalyzes the formation of 5-oxo-L-proline from L-gamma-glutamyl-L-epsilon-lysine. Inactive with L-gamma-glutamyl-alpha-amino acid substrates such as L-gamma-glutamyl-L-alpha-cysteine and L-gamma-glutamyl-L-alpha-alanine. In Mus musculus (Mouse), this protein is Gamma-glutamylaminecyclotransferase (Ggact).